We begin with the raw amino-acid sequence, 501 residues long: Lysine--tRNA ligase (501 aa).

Positions 411 and 418 each coordinate Mg(2+).

The protein belongs to the class-II aminoacyl-tRNA synthetase family. In terms of assembly, homodimer. Requires Mg(2+) as cofactor.

The protein localises to the cytoplasm. The enzyme catalyses tRNA(Lys) + L-lysine + ATP = L-lysyl-tRNA(Lys) + AMP + diphosphate. The protein is Lysine--tRNA ligase of Magnetococcus marinus (strain ATCC BAA-1437 / JCM 17883 / MC-1).